The chain runs to 315 residues: Ribosomal protein L11 methyltransferase (315 aa).

S-adenosyl-L-methionine contacts are provided by T163, G184, D206, and N248.

The protein belongs to the methyltransferase superfamily. PrmA family.

The protein resides in the cytoplasm. The catalysed reaction is L-lysyl-[protein] + 3 S-adenosyl-L-methionine = N(6),N(6),N(6)-trimethyl-L-lysyl-[protein] + 3 S-adenosyl-L-homocysteine + 3 H(+). Methylates ribosomal protein L11. The protein is Ribosomal protein L11 methyltransferase of Lacticaseibacillus paracasei (strain ATCC 334 / BCRC 17002 / CCUG 31169 / CIP 107868 / KCTC 3260 / NRRL B-441) (Lactobacillus paracasei).